The chain runs to 316 residues: DnaJ homolog subfamily B member 13 (316 aa).

Residues 4–68 (DYYSVLGITR…MKRGIYDKFG (65 aa)) enclose the J domain.

As to quaternary structure, homodimer. Component of the axonemal radial spoke complex 1 (RS1), at least composed of spoke head proteins RSPH1, RSPH3, RSPH9 and the cilia-specific component RSPH4A or sperm-specific component RSPH6A, spoke stalk proteins RSPH14, DNAJB13, DYDC1, ROPN1L and NME5, and the anchor protein IQUB. Interacts with SUN5. Interacts with IQUB. As to expression, specifically expressed in testis and trachea.

It is found in the cell projection. The protein localises to the cilium. It localises to the flagellum. Functions as part of axonemal radial spoke complexes that play an important part in the motility of sperm and cilia. The polypeptide is DnaJ homolog subfamily B member 13 (DNAJB13) (Homo sapiens (Human)).